The following is a 686-amino-acid chain: Translation initiation factor IF-2 (686 aa).

Residues M35 to R99 form a disordered region. A compositionally biased stretch (basic and acidic residues) spans L50 to K68. Residues D69–M79 show a composition bias toward basic residues. A compositionally biased stretch (basic and acidic residues) spans E87 to R99. Residues L186–K355 form the tr-type G domain. The interval G195–T202 is G1. GTP is bound at residue G195–T202. The segment at G220–H224 is G2. Positions D241–G244 are G3. Residues D241 to H245 and N295 to D298 contribute to the GTP site. The tract at residues N295–D298 is G4. Positions S331–L333 are G5.

It belongs to the TRAFAC class translation factor GTPase superfamily. Classic translation factor GTPase family. IF-2 subfamily.

The protein resides in the cytoplasm. Functionally, one of the essential components for the initiation of protein synthesis. Protects formylmethionyl-tRNA from spontaneous hydrolysis and promotes its binding to the 30S ribosomal subunits. Also involved in the hydrolysis of GTP during the formation of the 70S ribosomal complex. In Halothermothrix orenii (strain H 168 / OCM 544 / DSM 9562), this protein is Translation initiation factor IF-2.